The primary structure comprises 582 residues: Vacuolar basic amino acid transporter 5 (582 aa).

Residues 1-44 (MEETKYSSQQEIEGACGSDASLNARGSNDSPMGLSLYLCLASLT) are Cytoplasmic-facing. A helical transmembrane segment spans residues 45–65 (LVLFITALDILIVGTIIDVVA). At 66–80 (EQFGNYSKTGWLVTG) the chain is on the vacuolar side. N70 is a glycosylation site (N-linked (GlcNAc...) asparagine). The helical transmembrane segment at 81–101 (YSLPNAILSLIWGRFASIIGF) threads the bilayer. Topologically, residues 102-104 (QHS) are cytoplasmic. The helical transmembrane segment at 105-125 (LILAILIFEAGSLIAALASSM) threads the bilayer. At 126 to 132 (NMLIFGR) the chain is on the vacuolar side. A helical transmembrane segment spans residues 133-153 (VVAGVGGSGLQTLCFVIGCTM). Topologically, residues 154–160 (VGERSRP) are cytoplasmic. Residues 161–181 (LVISILSCAFAVAAIVGPIIG) traverse the membrane as a helical segment. Residues 182-191 (GAFTTHVTWR) are Vacuolar-facing. A helical transmembrane segment spans residues 192 to 212 (WCFYINLPIGGLAIIMFLLTY). Residues 213–256 (KAENKGILQQIKDAIGTISSFTFSKFRHQVNFKRLMNGIIFKFD) are Cytoplasmic-facing. The helical transmembrane segment at 257–277 (FFGFALCSAGLVLFLLGLTFG) threads the bilayer. Residues 278 to 287 (GNKYSWNSGQ) are Vacuolar-facing. Residues 288–308 (VITYLVLGVLLFIFSLVYDFF) traverse the membrane as a helical segment. Residues 309–329 (LFDKFNPEPDNISYRPLLLRR) are Cytoplasmic-facing. Residues 330 to 350 (LVAKPAIIIVNMVTFLLCTGY) form a helical membrane-spanning segment. At 351 to 372 (NGQMIYSVQFFQLIFASSAWKA) the chain is on the vacuolar side. Residues 373–393 (GLHLIPIVITNVIAAIASGVI) form a helical membrane-spanning segment. At 394–401 (TKKLGLVK) the chain is on the cytoplasmic side. The helical transmembrane segment at 402–422 (PLLIFGGVLGVIGAGLMTLMT) threads the bilayer. Residue N423 is glycosylated (N-linked (GlcNAc...) asparagine). The Vacuolar portion of the chain corresponds to 423 to 430 (NTSTKSTQ). Residues 431–451 (IGVLLLPGFSLGFALQASLMS) form a helical membrane-spanning segment. Residues 452–469 (AQLQITKDRPEAAMDFIE) lie on the Cytoplasmic side of the membrane. The chain crosses the membrane as a helical span at residues 470 to 492 (VTAFNTFMKSLGTTLGGVLSTTV). The Vacuolar segment spans residues 493 to 539 (FSASFHNKVSRAHLEPYEGKTVDDMILYRLQNYDGSHSTIGNILSDS). A helical transmembrane segment spans residues 540–560 (IKNVFWMDLGFYALGFLFCSF). Residues 561–582 (SSNKKLIIPKKDDTPEDNLEDK) are Cytoplasmic-facing.

It belongs to the major facilitator superfamily.

Its subcellular location is the vacuole membrane. Transporter required for vacuolar uptake of basic amino acids. This chain is Vacuolar basic amino acid transporter 5 (VBA5), found in Saccharomyces cerevisiae (strain ATCC 204508 / S288c) (Baker's yeast).